The sequence spans 119 residues: uncharacterized protein (119 aa).

The next 2 membrane-spanning stretches (helical) occupy residues 57 to 77 (FSHHLSILQSMCLHFIISILF) and 80 to 100 (YIFVFLFAFLLPSAFPLFILH).

The protein localises to the membrane. This is an uncharacterized protein from Saccharomyces cerevisiae (strain ATCC 204508 / S288c) (Baker's yeast).